Here is a 215-residue protein sequence, read N- to C-terminus: Chloramphenicol acetyltransferase (215 aa).

Histidine 189 serves as the catalytic Proton acceptor.

It belongs to the chloramphenicol acetyltransferase family. Homotrimer.

It carries out the reaction chloramphenicol + acetyl-CoA = chloramphenicol 3-acetate + CoA. This enzyme is an effector of chloramphenicol resistance in bacteria. The chain is Chloramphenicol acetyltransferase (cat) from Staphylococcus aureus.